A 465-amino-acid polypeptide reads, in one-letter code: Glutamate--tRNA ligase (465 aa).

The 'HIGH' region motif lies at Pro-11–Asn-21. Positions Lys-243–Arg-247 match the 'KMSKS' region motif. Lys-246 is an ATP binding site.

It belongs to the class-I aminoacyl-tRNA synthetase family. Glutamate--tRNA ligase type 1 subfamily. Monomer.

It is found in the cytoplasm. The enzyme catalyses tRNA(Glu) + L-glutamate + ATP = L-glutamyl-tRNA(Glu) + AMP + diphosphate. Catalyzes the attachment of glutamate to tRNA(Glu) in a two-step reaction: glutamate is first activated by ATP to form Glu-AMP and then transferred to the acceptor end of tRNA(Glu). In Cupriavidus metallidurans (strain ATCC 43123 / DSM 2839 / NBRC 102507 / CH34) (Ralstonia metallidurans), this protein is Glutamate--tRNA ligase.